A 52-amino-acid chain; its full sequence is Superoxide dismutase [Cu-Zn] 2 (52 aa).

Cu cation is bound at residue His-44.

This sequence belongs to the Cu-Zn superoxide dismutase family. As to quaternary structure, homodimer. Requires Cu cation as cofactor. Zn(2+) serves as cofactor.

The protein localises to the cytoplasm. The catalysed reaction is 2 superoxide + 2 H(+) = H2O2 + O2. In terms of biological role, destroys radicals which are normally produced within the cells and which are toxic to biological systems. The sequence is that of Superoxide dismutase [Cu-Zn] 2 from Debaryomyces hansenii (Yeast).